We begin with the raw amino-acid sequence, 229 residues long: Synaptogyrin-3 (229 aa).

M1 carries the N-acetylmethionine modification. The MARVEL domain maps to 20 to 172 (FARRPQTLLR…LTVKALQRFR (153 aa)). 4 helical membrane passes run 30–50 (VASWVFSIAVFGPIVNEGYVN), 70–90 (FGVALGLGAFLACAAFLLLDV), 105–125 (VLLDLGFSGLWSFLWFVGFCF), and 148–168 (AAIAFSFFSILSWVALTVKAL). Polar residues predominate over residues 209-219 (QSPPFTETLDT). The tract at residues 209–229 (QSPPFTETLDTSPKGYQVPAY) is disordered.

Belongs to the synaptogyrin family. Interacts (via N-terminus) with SLC6A3 (via N-terminus). May interact with VMAT2. Expressed in brain and placenta.

Its subcellular location is the cytoplasmic vesicle. The protein localises to the secretory vesicle. It is found in the synaptic vesicle membrane. The protein resides in the synapse. Functionally, may play a role in regulated exocytosis. May indirectly regulate the activity of the plasma membrane dopamine transporter SLC6A3 and thereby regulate dopamine transport back from the synaptic cleft into the presynaptic terminal. The protein is Synaptogyrin-3 of Homo sapiens (Human).